The chain runs to 492 residues: 56 kDa U1 small nuclear ribonucleoprotein component (492 aa).

Residues 1–15 (MRPRRRGLAYHHTKP) are compositionally biased toward basic residues. 2 disordered regions span residues 1 to 35 (MRPRRRGLAYHHTKPKGQLSQGHYPTTSNDGQRRK) and 300 to 371 (DQFP…NKPG). Over residues 18–30 (QLSQGHYPTTSND) the composition is skewed to polar residues. The span at 310 to 321 (SNSPSSNSISSS) shows a compositional bias: low complexity. Over residues 329–353 (TSYQTQPQRHAVNKPSNVLNSSNRH) the composition is skewed to polar residues.

Component of the 18S U1 snRNP particle, a subcomplex of the spliceosome. Interacts with the nuclear cap-binding complex CBC1-CBC2 (yCBC). Directly contacts intronic sequences of substrate pre-RNA.

The protein localises to the nucleus. Its function is as follows. Component of the U1 snRNP particle, which recognizes and binds the 5'-splice site of pre-mRNA. Together with other non-snRNP factors, U1 snRNP forms the spliceosomal commitment complex, that targets pre-mRNA to the splicing pathway. This is 56 kDa U1 small nuclear ribonucleoprotein component (SNU56) from Saccharomyces cerevisiae (strain ATCC 204508 / S288c) (Baker's yeast).